Here is a 406-residue protein sequence, read N- to C-terminus: Probable G-protein coupled receptor tkr-1 (406 aa).

At 1–47 (MNQEFLIQLGERACKNAENLTLPAELEGIFFCAPSSRESLATQVFVA) the chain is on the extracellular side. Residues 48 to 68 (IAFVLLMATAIIGNSVVMWII) form a helical membrane-spanning segment. The Cytoplasmic segment spans residues 69–76 (YQHKVMHY). A helical transmembrane segment spans residues 77-97 (GFNYFLFNMAFADLLIALFNV). Residues 98–115 (GTSWTYNLYYDWWYGDLC) lie on the Extracellular side of the membrane. The chain crosses the membrane as a helical span at residues 116 to 136 (TLTSFFGIAPTTVSVCSMMAL). Residues 137–158 (SWDRCQAVVNPLQKRPLSRKRS) lie on the Cytoplasmic side of the membrane. A helical transmembrane segment spans residues 159 to 179 (VIAILIIWVVSTVTALPFAIA). At 180–204 (ASVNSLYTYDVVTSTVSKAHVCSAP) the chain is on the extracellular side. The chain crosses the membrane as a helical span at residues 205 to 225 (VNTFFEKVLFGIQYALPIIIL). Topologically, residues 226-261 (GSTFTRIAVAFRATNEATDSSLKNNHTRAKSKAVKM) are cytoplasmic. A helical transmembrane segment spans residues 262–282 (LFLMVVAFVVCWLPYHIYHAF). Residues 283-297 (ALEEFFDAARGKYAY) lie on the Extracellular side of the membrane. Residues 298-318 (LLIYWIAMSSCAYNPIIYCFA) form a helical membrane-spanning segment. At 319–406 (NERFRIGFRY…KVHLLSCHER (88 aa)) the chain is on the cytoplasmic side.

It belongs to the G-protein coupled receptor 1 family.

It is found in the cell membrane. Functionally, not known. Putative receptor. The polypeptide is Probable G-protein coupled receptor tkr-1 (tkr-1) (Caenorhabditis elegans).